A 122-amino-acid polypeptide reads, in one-letter code: Flagellar protein FliT (122 aa).

Residues 1–50 (MTSTVEFINRWQRIALLSQSLLELAQRGEWDLLLQQEVSYLQSIETVMEK) form a required for homodimerization region. Residues 60-98 (IQDMVAGYIKQTLDNEQLLKGLLQQRLDELSSLIGQSTR) form a fliD binding region.

This sequence belongs to the FliT family. In terms of assembly, homodimer. Interacts with FliD and FlhC.

It is found in the cytoplasm. Its subcellular location is the cytosol. Its function is as follows. Dual-function protein that regulates the transcription of class 2 flagellar operons and that also acts as an export chaperone for the filament-capping protein FliD. As a transcriptional regulator, acts as an anti-FlhDC factor; it directly binds FlhC, thus inhibiting the binding of the FlhC/FlhD complex to class 2 promoters, resulting in decreased expression of class 2 flagellar operons. As a chaperone, effects FliD transition to the membrane by preventing its premature polymerization, and by directing it to the export apparatus. The polypeptide is Flagellar protein FliT (Salmonella schwarzengrund (strain CVM19633)).